The chain runs to 296 residues: Light-independent protochlorophyllide reductase iron-sulfur ATP-binding protein (296 aa).

ATP contacts are provided by residues 39-44 (GIGKST) and Lys68. Position 43 (Ser43) interacts with Mg(2+). Cys124 and Cys158 together coordinate [4Fe-4S] cluster. Residue 209–210 (NR) participates in ATP binding.

The protein belongs to the NifH/BchL/ChlL family. Homodimer. Protochlorophyllide reductase is composed of three subunits; ChlL, ChlN and ChlB. [4Fe-4S] cluster is required as a cofactor.

It carries out the reaction chlorophyllide a + oxidized 2[4Fe-4S]-[ferredoxin] + 2 ADP + 2 phosphate = protochlorophyllide a + reduced 2[4Fe-4S]-[ferredoxin] + 2 ATP + 2 H2O. The protein operates within porphyrin-containing compound metabolism; chlorophyll biosynthesis (light-independent). Functionally, component of the dark-operative protochlorophyllide reductase (DPOR) that uses Mg-ATP and reduced ferredoxin to reduce ring D of protochlorophyllide (Pchlide) to form chlorophyllide a (Chlide). This reaction is light-independent. The L component serves as a unique electron donor to the NB-component of the complex, and binds Mg-ATP. This Prochlorococcus marinus (strain SARG / CCMP1375 / SS120) protein is Light-independent protochlorophyllide reductase iron-sulfur ATP-binding protein.